A 203-amino-acid chain; its full sequence is 3-isopropylmalate dehydratase small subunit (203 aa).

Belongs to the LeuD family. LeuD type 1 subfamily. As to quaternary structure, heterodimer of LeuC and LeuD.

It carries out the reaction (2R,3S)-3-isopropylmalate = (2S)-2-isopropylmalate. It functions in the pathway amino-acid biosynthesis; L-leucine biosynthesis; L-leucine from 3-methyl-2-oxobutanoate: step 2/4. Its function is as follows. Catalyzes the isomerization between 2-isopropylmalate and 3-isopropylmalate, via the formation of 2-isopropylmaleate. The sequence is that of 3-isopropylmalate dehydratase small subunit from Symbiobacterium thermophilum (strain DSM 24528 / JCM 14929 / IAM 14863 / T).